Consider the following 216-residue polypeptide: MAAGPRTSMLLAFALLCLPWTQEVGAFPAMPLSSLFANAVLRAQHLHQLAADTYKEFERAYIPEGQRYSIQNTQAAFCFSETIPAPTGKDEAQQRSDVELLRFSLLLIQSWLGPVQFLSRVFTNSLVFGTSDRVYEKLKDLEEGIQALMRELEDGSPRAGQILKQTYDKFDTNMRSDDALLKNYGLLSCFKKDLHKAETYLRVMKCRRFVESSCAF.

The signal sequence occupies residues 1 to 26 (MAAGPRTSMLLAFALLCLPWTQEVGA). His-45 is a binding site for Zn(2+). A disulfide bridge links Cys-78 with Cys-189. Ser-131 carries the post-translational modification Phosphoserine. Glu-198 contributes to the Zn(2+) binding site. Cysteines 206 and 214 form a disulfide.

Belongs to the somatotropin/prolactin family.

It localises to the secreted. In terms of biological role, plays an important role in growth control. Its major role in stimulating body growth is to stimulate the liver and other tissues to secrete IGF1. It stimulates both the differentiation and proliferation of myoblasts. It also stimulates amino acid uptake and protein synthesis in muscle and other tissues. The protein is Somatotropin (GH1) of Delphinus delphis (Short-beaked common dolphin).